A 669-amino-acid chain; its full sequence is Dymeclin (669 aa).

G2 carries N-myristoyl glycine lipidation.

The protein belongs to the dymeclin family. In terms of assembly, interacts with GOLM1 and PPIB. Myristoylated in vitro; myristoylation is not essential for protein targeting to Golgi compartment.

The protein resides in the cytoplasm. It is found in the golgi apparatus. The protein localises to the membrane. Its function is as follows. Necessary for correct organization of Golgi apparatus. Involved in bone development. The polypeptide is Dymeclin (DYM) (Pongo abelii (Sumatran orangutan)).